Here is a 273-residue protein sequence, read N- to C-terminus: Formamidopyrimidine-DNA glycosylase (273 aa).

Proline 2 serves as the catalytic Schiff-base intermediate with DNA. Glutamate 3 acts as the Proton donor in catalysis. Residue lysine 58 is the Proton donor; for beta-elimination activity of the active site. DNA-binding residues include histidine 91, arginine 110, and arginine 153. The FPG-type zinc finger occupies lysine 238–lysine 272. The Proton donor; for delta-elimination activity role is filled by arginine 262.

Belongs to the FPG family. In terms of assembly, monomer. Requires Zn(2+) as cofactor.

It catalyses the reaction Hydrolysis of DNA containing ring-opened 7-methylguanine residues, releasing 2,6-diamino-4-hydroxy-5-(N-methyl)formamidopyrimidine.. The enzyme catalyses 2'-deoxyribonucleotide-(2'-deoxyribose 5'-phosphate)-2'-deoxyribonucleotide-DNA = a 3'-end 2'-deoxyribonucleotide-(2,3-dehydro-2,3-deoxyribose 5'-phosphate)-DNA + a 5'-end 5'-phospho-2'-deoxyribonucleoside-DNA + H(+). Involved in base excision repair of DNA damaged by oxidation or by mutagenic agents. Acts as a DNA glycosylase that recognizes and removes damaged bases. Has a preference for oxidized purines, such as 7,8-dihydro-8-oxoguanine (8-oxoG). Has AP (apurinic/apyrimidinic) lyase activity and introduces nicks in the DNA strand. Cleaves the DNA backbone by beta-delta elimination to generate a single-strand break at the site of the removed base with both 3'- and 5'-phosphates. In Lactobacillus delbrueckii subsp. bulgaricus (strain ATCC BAA-365 / Lb-18), this protein is Formamidopyrimidine-DNA glycosylase.